Reading from the N-terminus, the 301-residue chain is uncharacterized protein (301 aa).

Threonine 47 (charge relay system) is an active-site residue. Tyrosine 136 acts as the Proton donor in catalysis. Lysine 165 acts as the Schiff-base intermediate with substrate in catalysis.

The protein belongs to the DapA family. Homotetramer.

It localises to the cytoplasm. This is an uncharacterized protein from Thermofilum pendens (strain DSM 2475 / Hrk 5).